Consider the following 393-residue polypeptide: MSSALANIYARLPVSFTHGRGVWLWDTGERRYLDALAGIGVSCLGHGHPGLVAAISEQAARLIHTSNIYEVPQQAALARRLAELSGMSEVLFSNSGSEANEAAIKLARYYGYKQGNTHAHIITMDSSWHGRTLATLAATGSDKARQGFGPMPSGFIQVPYNDLPAIRAAGEAEPRVTAVLLEVLQGEGGIRPSDMAFLRGVRQLCTERGWLLMIDEVQSGIGRTGKWFAHQWADIRPDVMTLAKGLAGGVPIGAMLAAGPAAGVFAPGSHGTTFGGGPLACAAGLAVIDAIEQEGLLANAHEVGAHLHAALASELAGVPGIIEVRGRGLMLGIELDRPCGILATRAMEAGLLINVTRERVVRLLPPLILSGEEADQIVRILVPLIKQFLAQQQ.

Residue arginine 131 coordinates N(2)-acetyl-L-ornithine. A pyridoxal 5'-phosphate-binding site is contributed by 215–218 (DEVQ). Lysine 244 is subject to N6-(pyridoxal phosphate)lysine. Threonine 272 serves as a coordination point for N(2)-acetyl-L-ornithine. Threonine 273 is a pyridoxal 5'-phosphate binding site.

It belongs to the class-III pyridoxal-phosphate-dependent aminotransferase family. ArgD subfamily. As to quaternary structure, homodimer. Pyridoxal 5'-phosphate is required as a cofactor.

It is found in the cytoplasm. The catalysed reaction is N(2)-acetyl-L-ornithine + 2-oxoglutarate = N-acetyl-L-glutamate 5-semialdehyde + L-glutamate. It functions in the pathway amino-acid biosynthesis; L-arginine biosynthesis; N(2)-acetyl-L-ornithine from L-glutamate: step 4/4. The protein is Acetylornithine aminotransferase 1 of Bordetella bronchiseptica (strain ATCC BAA-588 / NCTC 13252 / RB50) (Alcaligenes bronchisepticus).